The following is a 292-amino-acid chain: UTP--glucose-1-phosphate uridylyltransferase (292 aa).

Belongs to the UDPGP type 2 family.

It catalyses the reaction alpha-D-glucose 1-phosphate + UTP + H(+) = UDP-alpha-D-glucose + diphosphate. Functionally, may play a role in stationary phase survival. This is UTP--glucose-1-phosphate uridylyltransferase (galU) from Mycoplasma genitalium (strain ATCC 33530 / DSM 19775 / NCTC 10195 / G37) (Mycoplasmoides genitalium).